The primary structure comprises 64 residues: MRCLPVFIILLLLIPSAPSVDAQPKTEDDVPLASLHDNAKLTLQGLWDKRCCPNLFYCCPDRRK.

The signal sequence occupies residues 1 to 22 (MRCLPVFIILLLLIPSAPSVDA). Residues 23–48 (QPKTEDDVPLASLHDNAKLTLQGLWD) constitute a propeptide that is removed on maturation.

It belongs to the conotoxin T superfamily. Contains 2 disulfide bonds that can be either 'C1-C3, C2-C4' or 'C1-C4, C2-C3', since these disulfide connectivities have been observed for conotoxins with cysteine framework V (for examples, see AC P0DQQ7 and AC P81755). In terms of tissue distribution, expressed by the venom duct.

It localises to the secreted. The protein is Conotoxin Leo-T1 of Conus leopardus (Leopard cone).